Consider the following 362-residue polypeptide: 3-dehydroquinate synthase (362 aa).

NAD(+) contacts are provided by residues 71–76 (DGEQYK), 105–109 (GVVGD), 129–130 (TT), K142, K151, and 169–172 (CLKT). Positions 184, 247, and 264 each coordinate Zn(2+).

It belongs to the sugar phosphate cyclases superfamily. Dehydroquinate synthase family. The cofactor is Co(2+). It depends on Zn(2+) as a cofactor. NAD(+) is required as a cofactor.

It is found in the cytoplasm. The catalysed reaction is 7-phospho-2-dehydro-3-deoxy-D-arabino-heptonate = 3-dehydroquinate + phosphate. It participates in metabolic intermediate biosynthesis; chorismate biosynthesis; chorismate from D-erythrose 4-phosphate and phosphoenolpyruvate: step 2/7. Catalyzes the conversion of 3-deoxy-D-arabino-heptulosonate 7-phosphate (DAHP) to dehydroquinate (DHQ). In Escherichia coli O81 (strain ED1a), this protein is 3-dehydroquinate synthase.